Reading from the N-terminus, the 210-residue chain is Uridine kinase (210 aa).

13-20 (GGSGSGKT) is a binding site for ATP.

This sequence belongs to the uridine kinase family.

The protein resides in the cytoplasm. The enzyme catalyses uridine + ATP = UMP + ADP + H(+). It catalyses the reaction cytidine + ATP = CMP + ADP + H(+). It participates in pyrimidine metabolism; CTP biosynthesis via salvage pathway; CTP from cytidine: step 1/3. The protein operates within pyrimidine metabolism; UMP biosynthesis via salvage pathway; UMP from uridine: step 1/1. In Oceanobacillus iheyensis (strain DSM 14371 / CIP 107618 / JCM 11309 / KCTC 3954 / HTE831), this protein is Uridine kinase.